Reading from the N-terminus, the 304-residue chain is MAEASAAGADSGAAVAAHRFFCHFCKGEVSPKLPEYICPRCESGFIEEVTDDSSFLGGGGSRIDNTTTTHFAELWGHLDHTMFFQDFRPFLSSSPLDQDNRANERGHQTHTDFWGARPPRLPLGRRYRSRGSSRPDRSPAIEGILQHIFAGFFANSAIPGSPHPFSWSGMLHSNPGDYAWGQTGLDAIVTQLLGQLENTGPPPADKEKITSLPTVTVTQEQVDMGLECPVCKEDYTVEEEVRQLPCNHFFHSSCIVPWLELHDTCPVCRKSLNGEDSTRQSQSTEASASNRFSNDSQLHDRWTF.

Ala-2 is modified (N-acetylalanine). The disordered stretch occupies residues 95 to 138; that stretch reads PLDQDNRANERGHQTHTDFWGARPPRLPLGRRYRSRGSSRPDRS. A compositionally biased stretch (basic and acidic residues) spans 98–110; sequence QDNRANERGHQTH. Residues Ser-132 and Ser-133 each carry the phosphoserine; by PKB/AKT1 modification. The RING-type zinc-finger motif lies at 228-269; it reads CPVCKEDYTVEEEVRQLPCNHFFHSSCIVPWLELHDTCPVCR. Residues 272–304 are disordered; the sequence is LNGEDSTRQSQSTEASASNRFSNDSQLHDRWTF. The span at 279–296 shows a compositional bias: polar residues; it reads RQSQSTEASASNRFSNDS.

Interacts with RAB7A. Interacts with EGFR and FLT3. Interacts with BST2. Interacts with STX17. Interacts with YWHAE. In terms of processing, phosphorylated by AKT1, allowing association with the 14-3-3 chaperones that facilitates associating with TLRs. RING-type zinc finger-dependent and E2-dependent autoubiquitination. Post-translationally, deubiquitinated by USP9X; antogonizing its autoubiquitination and subsequent proteasomal degradation. As to expression, expressed at extremely low levels in normal breast, prostate, lung, colon. Higher levels of expression are detected in heart, skeletal muscle, testis as well as in breast and prostate cancer cells.

The protein localises to the cytoplasm. It localises to the nucleus. Its subcellular location is the endoplasmic reticulum. The protein resides in the golgi apparatus. It carries out the reaction S-ubiquitinyl-[E2 ubiquitin-conjugating enzyme]-L-cysteine + [acceptor protein]-L-lysine = [E2 ubiquitin-conjugating enzyme]-L-cysteine + N(6)-ubiquitinyl-[acceptor protein]-L-lysine.. The protein operates within protein modification; protein ubiquitination. Its function is as follows. E3 ubiquitin-protein ligase that catalyzes the 'Lys-48'- and/or 'Lys-63'-linked polyubiquitination of various substrates and thereby plays a role in a number of signaling pathways including autophagy, innate immunity, cell proliferation and cell death. Plays a role in the endosomal trafficking and degradation of membrane receptors including EGFR, FLT3, MET and CXCR4 through their polyubiquitination. Participates together with BST2 in antiviral immunity by facilitating the internalization of HIV-1 virions into intracellular vesicles leading to their lysosomal degradation. Also possesses an antiviral activity independently of BST2 by promoting retroviral GAG proteins ubiquitination, redistribution to endo-lysosomal compartments and, ultimately, lysosomal degradation. Catalyzes distinct types of ubiquitination on MAVS and STING1 at different phases of viral infection to promote innate antiviral response. Mediates the 'Lys-48'-linked ubiquitination of MAVS leading to its proteasomal degradation and ubiquitinates STING1 via 'Lys-63'-linked polyubiquitination, critical for its oligomerization and the subsequent recruitment of TBK1. Plays a positive role in the autophagosome-lysosome fusion by interacting with STX17 and enhancing its stability without affecting 'Lys-48'- or 'Lys-63'-linked polyubiquitination levels, which in turn promotes autophagosome maturation. Negatively regulates TLR-induced expression of proinflammatory cytokines by catalyzing 'Lys-11'-linked ubiquitination of RAB1A and RAB13 to inhibit post-ER trafficking of TLRs to the Golgi by RAB1A and subsequently from the Golgi apparatus to the cell surface by RAB13. This Homo sapiens (Human) protein is E3 ubiquitin-protein ligase RNF115.